A 237-amino-acid chain; its full sequence is D-aminoacyl-tRNA deacylase (237 aa).

It belongs to the DtdA deacylase family. Monomer. Zn(2+) is required as a cofactor.

The enzyme catalyses a D-aminoacyl-tRNA + H2O = a tRNA + a D-alpha-amino acid + H(+). It catalyses the reaction glycyl-tRNA(Ala) + H2O = tRNA(Ala) + glycine + H(+). Functionally, D-aminoacyl-tRNA deacylase with broad substrate specificity. By recycling D-aminoacyl-tRNA to D-amino acids and free tRNA molecules, this enzyme counteracts the toxicity associated with the formation of D-aminoacyl-tRNA entities in vivo. The protein is D-aminoacyl-tRNA deacylase of Sulfurisphaera tokodaii (strain DSM 16993 / JCM 10545 / NBRC 100140 / 7) (Sulfolobus tokodaii).